Here is a 380-residue protein sequence, read N- to C-terminus: Cytochrome b (380 aa).

A run of 4 helical transmembrane segments spans residues 34 to 54 (FGWLLGVCVIVQIATGLFLAM), 78 to 99 (WLLRNLHANGASFFFICIYFHI), 114 to 134 (WNIGVILLFLVMATAFVGYVL), and 179 to 199 (FFTFHFILPFIIAAMSMIHLL). H84 and H98 together coordinate heme b. The heme b site is built by H183 and H197. H202 is a binding site for a ubiquinone. The next 4 membrane-spanning stretches (helical) occupy residues 227–247 (FKDLLGFIILLGALAILSTFA), 289–309 (LGGVLALLLSIMVLFLMPIIH), 321–341 (AAKAFFWALIANTIILTWIGG), and 348–368 (FISIGQIASGLYFLIFVLIIP).

Belongs to the cytochrome b family. The cytochrome bc1 complex contains 3 respiratory subunits (MT-CYB, CYC1 and UQCRFS1), 2 core proteins (UQCRC1 and UQCRC2) and probably 6 low-molecular weight proteins. Requires heme b as cofactor.

It is found in the mitochondrion inner membrane. Its function is as follows. Component of the ubiquinol-cytochrome c reductase complex (complex III or cytochrome b-c1 complex) that is part of the mitochondrial respiratory chain. The b-c1 complex mediates electron transfer from ubiquinol to cytochrome c. Contributes to the generation of a proton gradient across the mitochondrial membrane that is then used for ATP synthesis. This Rana dybowskii (Dybovsky's frog) protein is Cytochrome b (mt-cyb).